Reading from the N-terminus, the 418-residue chain is Tyrosine--tRNA ligase (418 aa).

Tyr-34 is an L-tyrosine binding site. Positions 39–48 (PTGDSMHIGH) match the 'HIGH' region motif. Tyr-166 and Gln-170 together coordinate L-tyrosine. Positions 228–232 (KFGKT) match the 'KMSKS' region motif. Residue Lys-231 coordinates ATP. In terms of domain architecture, S4 RNA-binding spans 350–417 (TNIVELLTET…KKNYFLAKVK (68 aa)).

This sequence belongs to the class-I aminoacyl-tRNA synthetase family. TyrS type 1 subfamily. In terms of assembly, homodimer.

It localises to the cytoplasm. The catalysed reaction is tRNA(Tyr) + L-tyrosine + ATP = L-tyrosyl-tRNA(Tyr) + AMP + diphosphate + H(+). Functionally, catalyzes the attachment of tyrosine to tRNA(Tyr) in a two-step reaction: tyrosine is first activated by ATP to form Tyr-AMP and then transferred to the acceptor end of tRNA(Tyr). In Levilactobacillus brevis (Lactobacillus brevis), this protein is Tyrosine--tRNA ligase.